Reading from the N-terminus, the 59-residue chain is Large ribosomal subunit protein uL30 (59 aa).

The protein belongs to the universal ribosomal protein uL30 family. Part of the 50S ribosomal subunit.

This is Large ribosomal subunit protein uL30 from Sulfurihydrogenibium sp. (strain YO3AOP1).